The chain runs to 293 residues: Elongation factor Ts (293 aa).

The segment at Thr-79 to Val-82 is involved in Mg(2+) ion dislocation from EF-Tu.

It belongs to the EF-Ts family.

It localises to the cytoplasm. In terms of biological role, associates with the EF-Tu.GDP complex and induces the exchange of GDP to GTP. It remains bound to the aminoacyl-tRNA.EF-Tu.GTP complex up to the GTP hydrolysis stage on the ribosome. In Macrococcus caseolyticus (strain JCSC5402) (Macrococcoides caseolyticum), this protein is Elongation factor Ts.